A 30-amino-acid chain; its full sequence is Hemocyanin subunit 2 (30 aa).

Belongs to the tyrosinase family. Hemocyanin subfamily. Hemolymph.

It is found in the secreted. The protein localises to the extracellular space. Functionally, hemocyanins are copper-containing oxygen carriers occurring freely dissolved in the hemolymph of many mollusks and arthropods. The chain is Hemocyanin subunit 2 from Homarus americanus (American lobster).